Reading from the N-terminus, the 397-residue chain is Acetate kinase (397 aa).

Asparagine 7 provides a ligand contact to Mg(2+). Lysine 14 serves as a coordination point for ATP. Substrate is bound at residue arginine 90. The Proton donor/acceptor role is filled by aspartate 147. ATP is bound by residues 207–211, 282–284, and 330–334; these read HLGNG, DFR, and GLGEN. Glutamate 383 lines the Mg(2+) pocket.

The protein belongs to the acetokinase family. Homodimer. The cofactor is Mg(2+). Requires Mn(2+) as cofactor.

It is found in the cytoplasm. It catalyses the reaction acetate + ATP = acetyl phosphate + ADP. The protein operates within metabolic intermediate biosynthesis; acetyl-CoA biosynthesis; acetyl-CoA from acetate: step 1/2. In terms of biological role, catalyzes the formation of acetyl phosphate from acetate and ATP. Can also catalyze the reverse reaction. This is Acetate kinase from Clostridium botulinum (strain Kyoto / Type A2).